A 212-amino-acid polypeptide reads, in one-letter code: Large ribosomal subunit protein uL3 (212 aa).

N5-methylglutamine is present on Q153.

It belongs to the universal ribosomal protein uL3 family. As to quaternary structure, part of the 50S ribosomal subunit. Forms a cluster with proteins L14 and L19. Post-translationally, methylated by PrmB.

Its function is as follows. One of the primary rRNA binding proteins, it binds directly near the 3'-end of the 23S rRNA, where it nucleates assembly of the 50S subunit. This Shewanella woodyi (strain ATCC 51908 / MS32) protein is Large ribosomal subunit protein uL3.